A 1874-amino-acid polypeptide reads, in one-letter code: Protein TIC 214 (1874 aa).

6 consecutive transmembrane segments (helical) span residues isoleucine 18–glycine 38, phenylalanine 64–leucine 84, proline 87–histidine 107, leucine 124–leucine 144, valine 172–isoleucine 192, and isoleucine 221–isoleucine 241. Disordered stretches follow at residues glutamate 248–valine 310 and lysine 1567–aspartate 1624. A compositionally biased stretch (acidic residues) spans glycine 255–threonine 268. Basic and acidic residues-rich tracts occupy residues aspartate 298–valine 310 and asparagine 1584–alanine 1601.

It belongs to the TIC214 family. In terms of assembly, part of the Tic complex.

It localises to the plastid. It is found in the chloroplast inner membrane. Involved in protein precursor import into chloroplasts. May be part of an intermediate translocation complex acting as a protein-conducting channel at the inner envelope. This Coffea arabica (Arabian coffee) protein is Protein TIC 214.